We begin with the raw amino-acid sequence, 387 residues long: V-set and immunoglobulin domain-containing protein 1 (387 aa).

Residues 1–21 (MVFAFWKVFLILSCLAGQVSV) form the signal peptide. The Ig-like V-type domain maps to 22 to 132 (VQVTIPDGFV…DFLGQNQGIL (111 aa)). Residues 22-232 (VQVTIPDGFV…EIDLTSSHPE (211 aa)) are Extracellular-facing. N-linked (GlcNAc...) asparagine glycosylation is found at Asn32 and Asn38. Cys43 and Cys116 form a disulfide bridge. N-linked (GlcNAc...) asparagine glycosylation is found at Asn133, Asn200, and Asn219. An Ig-like C2-type domain is found at 140-227 (PSKPLCSVQG…GNSSCEIDLT (88 aa)). A disulfide bond links Cys161 and Cys211. The chain crosses the membrane as a helical span at residues 233-253 (VGIIVGALIGSLVGAAIIISV). Residues 254–387 (VCFARNKAKA…SEDEKGVVKA (134 aa)) lie on the Cytoplasmic side of the membrane. Residues 266-387 (KERNSKTIAE…SEDEKGVVKA (122 aa)) are disordered. Basic and acidic residues predominate over residues 284 to 296 (PRGESEAMPREDA). The segment covering 299 to 308 (LEVTLPSSIH) has biased composition (polar residues). Positions 325-335 (TQEPAPEPAPG) are enriched in pro residues. Acidic residues predominate over residues 344 to 368 (LDIELELEPETQSELEPEPEPEPES).

In terms of processing, highly N-glycosylated. Appears not to contain significant amounts of O-linked carbohydrates or sialic acid in its sugar moieties. Detected only in stomach mucosa and testis, and to a much lesser level in pancreas (at protein level). Detected in gastric cancers (31%), esophageal carcinomas (50%) and ovarian cancers (23%).

The protein localises to the membrane. In Homo sapiens (Human), this protein is V-set and immunoglobulin domain-containing protein 1 (VSIG1).